Reading from the N-terminus, the 136-residue chain is Putative zinc finger protein 818 (136 aa).

A C2H2-type 1; degenerate zinc finger spans residues 64-83; the sequence is NVCGKVLSQNSHLVNHQRIH. A C2H2-type 2 zinc finger spans residues 89–111; sequence YRCHECGKAFTQGSRFINHQIVH.

Belongs to the krueppel C2H2-type zinc-finger protein family.

It is found in the nucleus. May be involved in transcriptional regulation. This chain is Putative zinc finger protein 818 (ZNF818P), found in Homo sapiens (Human).